A 388-amino-acid chain; its full sequence is Probable tRNA sulfurtransferase (388 aa).

In terms of domain architecture, THUMP spans 55 to 162 (VTLDDKLKKI…PEGVLIFTDR (108 aa)). ATP is bound by residues 180 to 181 (LL), 205 to 206 (TF), arginine 264, glycine 286, and glutamine 295.

This sequence belongs to the ThiI family.

It localises to the cytoplasm. It catalyses the reaction [ThiI sulfur-carrier protein]-S-sulfanyl-L-cysteine + a uridine in tRNA + 2 reduced [2Fe-2S]-[ferredoxin] + ATP + H(+) = [ThiI sulfur-carrier protein]-L-cysteine + a 4-thiouridine in tRNA + 2 oxidized [2Fe-2S]-[ferredoxin] + AMP + diphosphate. The enzyme catalyses [ThiS sulfur-carrier protein]-C-terminal Gly-Gly-AMP + S-sulfanyl-L-cysteinyl-[cysteine desulfurase] + AH2 = [ThiS sulfur-carrier protein]-C-terminal-Gly-aminoethanethioate + L-cysteinyl-[cysteine desulfurase] + A + AMP + 2 H(+). Its pathway is cofactor biosynthesis; thiamine diphosphate biosynthesis. Functionally, catalyzes the ATP-dependent transfer of a sulfur to tRNA to produce 4-thiouridine in position 8 of tRNAs, which functions as a near-UV photosensor. Also catalyzes the transfer of sulfur to the sulfur carrier protein ThiS, forming ThiS-thiocarboxylate. This is a step in the synthesis of thiazole, in the thiamine biosynthesis pathway. The sulfur is donated as persulfide by IscS. The chain is Probable tRNA sulfurtransferase from Thermotoga maritima (strain ATCC 43589 / DSM 3109 / JCM 10099 / NBRC 100826 / MSB8).